A 121-amino-acid chain; its full sequence is Movement protein TGBp3 (121 aa).

Positions 1–40 (MHYPTEADTSTGPNPSATSAPVRPRHVTPSLSPSSSSSPS) are disordered. At 1–43 (MHYPTEADTSTGPNPSATSAPVRPRHVTPSLSPSSSSSPSPDS) the chain is on the lumenal side. Residues 7–19 (ADTSTGPNPSATS) show a composition bias toward polar residues. The span at 29–40 (PSLSPSSSSSPS) shows a compositional bias: low complexity. Residues 44–64 (FYYFLAAAVILTAALAAALLT) form a helical membrane-spanning segment. At 65–121 (PNPGCTIVITGHTTIIQGSCPIPPQLVLAAHPRGLSLEQYLKFTNTLPDGSQHRSHR) the chain is on the cytoplasmic side.

It belongs to the Tymovirales TGBp3 protein family.

It is found in the host endoplasmic reticulum membrane. Functionally, plays a role in viral cell-to-cell propagation, by facilitating genome transport to neighboring plant cells through plasmosdesmata. May induce the formation of granular vesicles derived from the Endoplasmic reticulum, which align on actin filaments. This is Movement protein TGBp3 from Plantago asiatica (P1AMV).